A 363-amino-acid chain; its full sequence is 3-isopropylmalate dehydrogenase (363 aa).

Position 78–91 (78–91) interacts with NAD(+); sequence GKRWDHLPINERPE. Positions 99, 109, 138, and 227 each coordinate substrate. Positions 227, 251, and 255 each coordinate Mg(2+). Residue 285–297 participates in NAD(+) binding; the sequence is GSAPDIAGKNTAN.

Belongs to the isocitrate and isopropylmalate dehydrogenases family. LeuB type 1 subfamily. In terms of assembly, homodimer. Requires Mg(2+) as cofactor. The cofactor is Mn(2+).

The protein localises to the cytoplasm. It carries out the reaction (2R,3S)-3-isopropylmalate + NAD(+) = 4-methyl-2-oxopentanoate + CO2 + NADH. The protein operates within amino-acid biosynthesis; L-leucine biosynthesis; L-leucine from 3-methyl-2-oxobutanoate: step 3/4. In terms of biological role, catalyzes the oxidation of 3-carboxy-2-hydroxy-4-methylpentanoate (3-isopropylmalate) to 3-carboxy-4-methyl-2-oxopentanoate. The product decarboxylates to 4-methyl-2 oxopentanoate. The chain is 3-isopropylmalate dehydrogenase from Buchnera aphidicola subsp. Uroleucon helianthicola.